Here is a 377-residue protein sequence, read N- to C-terminus: MSNRIQTLKEAKRIVVKIGSAVLTTAEGINLGLICRLADQLATLHERGVDIVLVSSGAVAAGRNSIPSGAKLDDLPARQAASAIGQSRLMHEYDETFRRFGLVTSQVLLTRDDLKHRDRFLNARNTLSRLLEWRVIPIINENDTVAVQELEFGDNDTLASLILNVVEADLFINLTSADGVFDKNPDKNPDAKPLACIENIHDLDLDAMCDGKTAVGSGGMFSKMRAANRAAQLGVPTLILAGKDRMIIERIFNGEERGTWIVPDEKSVSRRKYWLAYHCDPAGDLVIDDGAQKALLSGGKSLLPAGIIEVDGKFKAGELVRVVNKEGKSLAVGLSCYNSTDIIKIMGCKSCEIESILGKCPYPEAIHRDNLLLDAAL.

Lys17 serves as a coordination point for ATP. Residues Ser56, Asp143, and Asn155 each coordinate substrate. 217-223 (SGGMFSK) serves as a coordination point for ATP. One can recognise a PUA domain in the interval 282–360 (AGDLVIDDGA…CEIESILGKC (79 aa)).

The protein belongs to the glutamate 5-kinase family.

Its subcellular location is the cytoplasm. It catalyses the reaction L-glutamate + ATP = L-glutamyl 5-phosphate + ADP. The protein operates within amino-acid biosynthesis; L-proline biosynthesis; L-glutamate 5-semialdehyde from L-glutamate: step 1/2. In terms of biological role, catalyzes the transfer of a phosphate group to glutamate to form L-glutamate 5-phosphate. The chain is Glutamate 5-kinase from Maridesulfovibrio salexigens (strain ATCC 14822 / DSM 2638 / NCIMB 8403 / VKM B-1763) (Desulfovibrio salexigens).